Reading from the N-terminus, the 244-residue chain is Methylthioribulose-1-phosphate dehydratase (244 aa).

Cysteine 89 contributes to the substrate binding site. The Zn(2+) site is built by histidine 107 and histidine 109. Glutamate 130 (proton donor/acceptor) is an active-site residue. Position 192 (histidine 192) interacts with Zn(2+).

The protein belongs to the aldolase class II family. MtnB subfamily. Zn(2+) is required as a cofactor.

The protein resides in the cytoplasm. It carries out the reaction 5-(methylsulfanyl)-D-ribulose 1-phosphate = 5-methylsulfanyl-2,3-dioxopentyl phosphate + H2O. It participates in amino-acid biosynthesis; L-methionine biosynthesis via salvage pathway; L-methionine from S-methyl-5-thio-alpha-D-ribose 1-phosphate: step 2/6. In terms of biological role, catalyzes the dehydration of methylthioribulose-1-phosphate (MTRu-1-P) into 2,3-diketo-5-methylthiopentyl-1-phosphate (DK-MTP-1-P). This Saccharomyces cerevisiae (strain AWRI1631) (Baker's yeast) protein is Methylthioribulose-1-phosphate dehydratase.